The primary structure comprises 463 residues: Soluble pyridine nucleotide transhydrogenase (463 aa).

Residue 35–44 (EDKPTVGGNC) coordinates FAD.

This sequence belongs to the class-I pyridine nucleotide-disulfide oxidoreductase family. FAD serves as cofactor.

It is found in the cytoplasm. It catalyses the reaction NAD(+) + NADPH = NADH + NADP(+). In terms of biological role, conversion of NADPH, generated by peripheral catabolic pathways, to NADH, which can enter the respiratory chain for energy generation. This chain is Soluble pyridine nucleotide transhydrogenase, found in Marinobacter nauticus (strain ATCC 700491 / DSM 11845 / VT8) (Marinobacter aquaeolei).